The sequence spans 532 residues: MTKYIFVTGGVVSSIGKGITAASLGRLLKNRGLSVTIQKFDPYINVDPGTMSPYQHGEVYVTDDGAETDLDLGHYERFIDINLNKYSNVTTGKVYSEVIKKERRGDYLGGTVQVIPHITNELKDRVFRAARMTNSDIIITEIGGTVGDIESLPFLEAIRQIKGDVGAENVLYIHTTLIPYIKAAGEMKTKPTQHSVKELRSLGIQPNIIVVRTEQPVSQEMKDKIALFCDIKASEVIESRDEETLYNVPLSLQKQKMDDIVLEHLQLEAPQAEMTDWKNLVHRVKNLSKKVRIGLVGKYVSLQDAYLSVAEALRHAGYDHDAEIEIDWIDSEKVTKENVAEIMKDVDGILVPGGFGDRAIEGKIAAIEYARVNKVPYFGICLGMQLATVEFARNVLGLEGAHSAEIEPETNHNIIDLLPEQKNIENMGGTLRLGLYPARIKQGTKAEAAYGTTLVEERHRHRYEFNNEYREQMEEAGMIVSATSPDGRLVEVVELIDHPWFVACQYHPEFISRPNRPQSLFKDFVGAALKNK.

The interval 1–267 (MTKYIFVTGG…DDIVLEHLQL (267 aa)) is amidoligase domain. A CTP-binding site is contributed by Ser-13. A UTP-binding site is contributed by Ser-13. An ATP-binding site is contributed by 14 to 19 (SIGKGI). Tyr-54 is a binding site for L-glutamine. Residue Asp-71 coordinates ATP. Asp-71 and Glu-141 together coordinate Mg(2+). Residues 148–150 (DIE), 188–193 (KTKPTQ), and Lys-224 contribute to the CTP site. UTP is bound by residues 188-193 (KTKPTQ) and Lys-224. The Glutamine amidotransferase type-1 domain occupies 292-532 (RIGLVGKYVS…DFVGAALKNK (241 aa)). Gly-354 serves as a coordination point for L-glutamine. Residue Cys-381 is the Nucleophile; for glutamine hydrolysis of the active site. L-glutamine contacts are provided by residues 382–385 (LGMQ), Glu-405, and Arg-462. Residues His-507 and Glu-509 contribute to the active site.

It belongs to the CTP synthase family. As to quaternary structure, homotetramer.

It carries out the reaction UTP + L-glutamine + ATP + H2O = CTP + L-glutamate + ADP + phosphate + 2 H(+). The catalysed reaction is L-glutamine + H2O = L-glutamate + NH4(+). The enzyme catalyses UTP + NH4(+) + ATP = CTP + ADP + phosphate + 2 H(+). The protein operates within pyrimidine metabolism; CTP biosynthesis via de novo pathway; CTP from UDP: step 2/2. With respect to regulation, allosterically activated by GTP, when glutamine is the substrate; GTP has no effect on the reaction when ammonia is the substrate. The allosteric effector GTP functions by stabilizing the protein conformation that binds the tetrahedral intermediate(s) formed during glutamine hydrolysis. Inhibited by the product CTP, via allosteric rather than competitive inhibition. Its function is as follows. Catalyzes the ATP-dependent amination of UTP to CTP with either L-glutamine or ammonia as the source of nitrogen. Regulates intracellular CTP levels through interactions with the four ribonucleotide triphosphates. The protein is CTP synthase of Listeria monocytogenes serovar 1/2a (strain ATCC BAA-679 / EGD-e).